A 229-amino-acid polypeptide reads, in one-letter code: Biosynthetic peptidoglycan transglycosylase (229 aa).

A helical membrane pass occupies residues 10 to 30 (LLLALVLVVLYQFWIFMHILW).

The protein belongs to the glycosyltransferase 51 family.

It localises to the cell inner membrane. It carries out the reaction [GlcNAc-(1-&gt;4)-Mur2Ac(oyl-L-Ala-gamma-D-Glu-L-Lys-D-Ala-D-Ala)](n)-di-trans,octa-cis-undecaprenyl diphosphate + beta-D-GlcNAc-(1-&gt;4)-Mur2Ac(oyl-L-Ala-gamma-D-Glu-L-Lys-D-Ala-D-Ala)-di-trans,octa-cis-undecaprenyl diphosphate = [GlcNAc-(1-&gt;4)-Mur2Ac(oyl-L-Ala-gamma-D-Glu-L-Lys-D-Ala-D-Ala)](n+1)-di-trans,octa-cis-undecaprenyl diphosphate + di-trans,octa-cis-undecaprenyl diphosphate + H(+). Its pathway is cell wall biogenesis; peptidoglycan biosynthesis. Its function is as follows. Peptidoglycan polymerase that catalyzes glycan chain elongation from lipid-linked precursors. This chain is Biosynthetic peptidoglycan transglycosylase, found in Methylobacillus flagellatus (strain ATCC 51484 / DSM 6875 / VKM B-1610 / KT).